A 265-amino-acid chain; its full sequence is Protein Msed_2121 (265 aa).

This sequence belongs to the CinA family.

The protein is Protein Msed_2121 of Metallosphaera sedula (strain ATCC 51363 / DSM 5348 / JCM 9185 / NBRC 15509 / TH2).